The primary structure comprises 191 residues: Small ribosomal subunit protein eS7 (191 aa).

This sequence belongs to the eukaryotic ribosomal protein eS7 family.

This chain is Small ribosomal subunit protein eS7 (RPS7), found in Hordeum vulgare (Barley).